The chain runs to 199 residues: Recombination protein RecR (199 aa).

The C4-type zinc finger occupies 58 to 73; sequence CSRCFYFTEEDPCPLC. The Toprim domain maps to 81-176; that stretch reads QLICVVEEPQ…KVTRLAHGIP (96 aa).

The protein belongs to the RecR family.

In terms of biological role, may play a role in DNA repair. It seems to be involved in an RecBC-independent recombinational process of DNA repair. It may act with RecF and RecO. The protein is Recombination protein RecR of Syntrophotalea carbinolica (strain DSM 2380 / NBRC 103641 / GraBd1) (Pelobacter carbinolicus).